Here is a 516-residue protein sequence, read N- to C-terminus: Bifunctional pantoate ligase/cytidylate kinase (516 aa).

Positions 1–279 (MVRKIFQTNA…CGSTRLIDHT (279 aa)) are pantoate--beta-alanine ligase. Residue 29-36 (MGGLHPGH) coordinates ATP. His-36 functions as the Proton donor in the catalytic mechanism. Gln-64 contributes to the (R)-pantoate binding site. A beta-alanine-binding site is contributed by Gln-64. ATP is bound at residue 153–156 (GEKD). Gln-159 contributes to the (R)-pantoate binding site. 190-193 (YSSR) contributes to the ATP binding site. A cytidylate kinase region spans residues 280-516 (FLMHRKPIIA…PEEVWPTPNS (237 aa)).

It in the N-terminal section; belongs to the pantothenate synthetase family. The protein in the C-terminal section; belongs to the cytidylate kinase family. Type 1 subfamily.

It localises to the cytoplasm. The catalysed reaction is (R)-pantoate + beta-alanine + ATP = (R)-pantothenate + AMP + diphosphate + H(+). The enzyme catalyses CMP + ATP = CDP + ADP. It catalyses the reaction dCMP + ATP = dCDP + ADP. It participates in cofactor biosynthesis; (R)-pantothenate biosynthesis; (R)-pantothenate from (R)-pantoate and beta-alanine: step 1/1. Catalyzes the condensation of pantoate with beta-alanine in an ATP-dependent reaction via a pantoyl-adenylate intermediate. In terms of biological role, catalyzes the transfer of a phosphate group from ATP to either CMP or dCMP to form CDP or dCDP and ADP, respectively. This Prochlorococcus marinus (strain NATL2A) protein is Bifunctional pantoate ligase/cytidylate kinase.